A 155-amino-acid polypeptide reads, in one-letter code: S-ribosylhomocysteine lyase (155 aa).

Positions 57, 61, and 124 each coordinate Fe cation.

Belongs to the LuxS family. Homodimer. Fe cation serves as cofactor.

The catalysed reaction is S-(5-deoxy-D-ribos-5-yl)-L-homocysteine = (S)-4,5-dihydroxypentane-2,3-dione + L-homocysteine. Involved in the synthesis of autoinducer 2 (AI-2) which is secreted by bacteria and is used to communicate both the cell density and the metabolic potential of the environment. The regulation of gene expression in response to changes in cell density is called quorum sensing. Catalyzes the transformation of S-ribosylhomocysteine (RHC) to homocysteine (HC) and 4,5-dihydroxy-2,3-pentadione (DPD). This chain is S-ribosylhomocysteine lyase, found in Listeria monocytogenes serotype 4a (strain HCC23).